Here is a 219-residue protein sequence, read N- to C-terminus: Small ribosomal subunit protein uS3 (219 aa).

In terms of domain architecture, KH type-2 spans 39 to 108; that stretch reads IKEFIKKNYF…KVTVKVQEIK (70 aa).

It belongs to the universal ribosomal protein uS3 family. In terms of assembly, part of the 30S ribosomal subunit. Forms a tight complex with proteins S10 and S14.

Functionally, binds the lower part of the 30S subunit head. Binds mRNA in the 70S ribosome, positioning it for translation. The chain is Small ribosomal subunit protein uS3 from Fusobacterium nucleatum subsp. nucleatum (strain ATCC 25586 / DSM 15643 / BCRC 10681 / CIP 101130 / JCM 8532 / KCTC 2640 / LMG 13131 / VPI 4355).